Consider the following 316-residue polypeptide: SHC-transforming protein homolog 1 (316 aa).

The PID domain maps to 16–158; sequence GVSLSATYLG…LIDVLTTAIN (143 aa). In terms of domain architecture, SH2 spans 211–307; it reads WYHGNLSRED…ETSLNLIRPV (97 aa). Residues 292 to 316 are disordered; sequence SEGRDRETSLNLIRPVPCPGSDDIE.

As to quaternary structure, interacts (via PID domain) with daf-2 (via cytoplasmic domain). Interacts with mek-1; the interaction is independent of mek-1 catalytic activity and is constitutive. Interacts (via N-terminus) with mlk-1 (via NPQY motif when phosphorylated on tyrosine residue). Does not interact with jkk-1 or sek-1. Interacts (via SH2 domain) with svh-2. Interacts with svh-4. Expressed in hypodermis, intestine, head and tail neurons, pharynx, gonads, vulva and body muscles.

The protein resides in the cytoplasm. Its subcellular location is the nucleus. It is found in the cell membrane. In terms of biological role, scaffold protein which plays an important role in the activation of the JNK pathway composed of mlk-1, mek-1 and kgb-1; by bringing together mek-1 and mlk-1, promotes mlk-1-mediated phosphorylation and activation of mek-1 which in turn phosphorylates kgb-1. In addition, negatively modulates the activation of the insulin/IGF-1-like signaling (IIS) probably by inhibiting the insulin receptor daf-2. Positively regulates the activity of the transcription factor daf-16/FOXO by both inhibiting IIS and activating the JNK pathway. Plays a role in maintaining gonadal basement membrane integrity through activation of the JNK pathway components mek-1 and jnk-1. Involved in the response to several environmental stresses including heavy metal ions (Cu(2+) and Cd(2+)), heat, oxidative and protein misfolding (ER) stresses. Plays a role in gonad and germline development following the L1 diapause. Plays a role in life span and egg laying. Plays a role in axon regeneration after injury. The polypeptide is SHC-transforming protein homolog 1 (Caenorhabditis elegans).